We begin with the raw amino-acid sequence, 467 residues long: Na(+)-translocating NADH-quinone reductase subunit A (467 aa).

The protein belongs to the NqrA family. Composed of six subunits; NqrA, NqrB, NqrC, NqrD, NqrE and NqrF.

The enzyme catalyses a ubiquinone + n Na(+)(in) + NADH + H(+) = a ubiquinol + n Na(+)(out) + NAD(+). Its function is as follows. NQR complex catalyzes the reduction of ubiquinone-1 to ubiquinol by two successive reactions, coupled with the transport of Na(+) ions from the cytoplasm to the periplasm. NqrA to NqrE are probably involved in the second step, the conversion of ubisemiquinone to ubiquinol. This is Na(+)-translocating NADH-quinone reductase subunit A from Chlamydia pneumoniae (Chlamydophila pneumoniae).